Here is a 424-residue protein sequence, read N- to C-terminus: Glutamate-1-semialdehyde 2,1-aminomutase (424 aa).

At Lys-263 the chain carries N6-(pyridoxal phosphate)lysine.

The protein belongs to the class-III pyridoxal-phosphate-dependent aminotransferase family. HemL subfamily. In terms of assembly, homodimer. Requires pyridoxal 5'-phosphate as cofactor.

Its subcellular location is the cytoplasm. The enzyme catalyses (S)-4-amino-5-oxopentanoate = 5-aminolevulinate. The protein operates within porphyrin-containing compound metabolism; protoporphyrin-IX biosynthesis; 5-aminolevulinate from L-glutamyl-tRNA(Glu): step 2/2. The polypeptide is Glutamate-1-semialdehyde 2,1-aminomutase (Campylobacter jejuni (strain RM1221)).